We begin with the raw amino-acid sequence, 609 residues long: Sporulation-specific protein 21 (609 aa).

Disordered regions lie at residues 1–50 (MDNI…LENS), 68–96 (PASK…DGNS), and 124–165 (KLDS…SIKG). A compositionally biased stretch (polar residues) spans 10–31 (MEGTSTMTVTSRSSEDSSCISN). The span at 32–43 (HEQDTDTHKDGD) shows a compositional bias: basic and acidic residues. Low complexity predominate over residues 68-81 (PASKSSRSIGSMKS). Composition is skewed to polar residues over residues 82–96 (NQSL…DGNS) and 127–136 (STGSQRSKNN). Residues 143-159 (SSTTSQTTCSSSSSSSS) are compositionally biased toward low complexity. Coiled coils occupy residues 283 to 342 (RTKI…DNES), 357 to 393 (RETL…ATNF), and 424 to 483 (ENLT…LLIE). The disordered stretch occupies residues 586–609 (DQKSNQNSSTPYKQSQRQVPHSIK). A compositionally biased stretch (polar residues) spans 587–609 (QKSNQNSSTPYKQSQRQVPHSIK).

This sequence belongs to the MPC70 family. Interacts directly with MPC54, NUD1 and SPC42. Interacts with ADY3. Interacts with ADY4. Probable component of a SPB complex composed of ADY3, SSP1, DON1, MPC54, SPO21/MPC70, NUD1 and CNM67.

It localises to the prospore membrane. It is found in the cytoplasm. Its subcellular location is the cytoskeleton. The protein localises to the spindle pole. Its function is as follows. Involved in the pathway that organizes the shaping and sizing of the prospore membrane (PSM) during sporulation. May provide a meiosis-specific scaffold for the assembly of other proteins on spindle pole bodies (SPBs), and may be a limiting component for SPB formation. The chain is Sporulation-specific protein 21 (SPO21) from Saccharomyces cerevisiae (strain ATCC 204508 / S288c) (Baker's yeast).